Reading from the N-terminus, the 218-residue chain is Large ribosomal subunit protein uL1 (218 aa).

The protein belongs to the universal ribosomal protein uL1 family. As to quaternary structure, part of the 50S ribosomal subunit.

Its function is as follows. Binds directly to 23S rRNA. Probably involved in E site tRNA release. Functionally, protein L1 is also a translational repressor protein, it controls the translation of its operon by binding to its mRNA. This chain is Large ribosomal subunit protein uL1, found in Metallosphaera sedula (strain ATCC 51363 / DSM 5348 / JCM 9185 / NBRC 15509 / TH2).